Here is a 559-residue protein sequence, read N- to C-terminus: Formate--tetrahydrofolate ligase (559 aa).

68 to 75 (TPAGEGKT) lines the ATP pocket.

The protein belongs to the formate--tetrahydrofolate ligase family.

It catalyses the reaction (6S)-5,6,7,8-tetrahydrofolate + formate + ATP = (6R)-10-formyltetrahydrofolate + ADP + phosphate. It functions in the pathway one-carbon metabolism; tetrahydrofolate interconversion. This Rhizobium etli (strain ATCC 51251 / DSM 11541 / JCM 21823 / NBRC 15573 / CFN 42) protein is Formate--tetrahydrofolate ligase.